A 277-amino-acid polypeptide reads, in one-letter code: Outer kinetochore KNL1 complex subunit ZWINT (277 aa).

Residues 80-155 (ASEDTSRQKA…MEKRRAVQNQ (76 aa)) form an interaction with NDC80 and ZW10 region. The stretch at 104-217 (REHVEAIKIG…RYQTFLQLLY (114 aa)) forms a coiled coil. Residues 228–277 (AEAEAENLPDDKPQQPTRPQEQSTGDTMGRDPGVSFKAVGLQPAGDVNLP) are disordered. Residues 241-253 (QQPTRPQEQSTGD) show a composition bias toward polar residues.

Component of the KNL1 complex composed of KNL1 and ZWINT. Part of the ten-subunit outer kinetochore KMN network that includes the KNL1, MIS12 and NDC80 complexes; a bioriented kinetochore contains approximately 150 copies of the network. Interacts with the MIS12 complex subunits MIS12 DSN1, and PMF1. Interacts with the NDC80 complex subunit NDC80 during mitosis. Interacts with ZW10. Interacts with CETN3.

It is found in the nucleus. The protein localises to the chromosome. It localises to the centromere. The protein resides in the kinetochore. Its function is as follows. Acts as a component of the outer kinetochore KNL1 complex that serves as a docking point for spindle assembly checkpoint components and mediates microtubule-kinetochore interactions. Kinetochores, consisting of a centromere-associated inner segment and a microtubule-contacting outer segment, play a crucial role in chromosome segregation by mediating the physical connection between centromeric DNA and spindle microtubules. The outer kinetochore is made up of the ten-subunit KMN network, comprising the MIS12, NDC80 and KNL1 complexes, and auxiliary microtubule-associated components; together they connect the outer kinetochore with the inner kinetochore, bind microtubules, and mediate interactions with mitotic checkpoint proteins that delay anaphase until chromosomes are bioriented on the spindle. Targets the RZZ complex to the kinetochore at prometaphase. Recruits MAD2L1 to the kinetochore, but is not required for BUB1B localization. In addition to orienting mitotic chromosomes, it is also essential for alignment of homologous chromosomes during meiotic metaphase I. In meiosis I, required to activate the spindle assembly checkpoint at unattached kinetochores to correct erroneous kinetochore-microtubule attachments. This Homo sapiens (Human) protein is Outer kinetochore KNL1 complex subunit ZWINT (ZWINT).